The primary structure comprises 476 residues: tRNA sulfurtransferase (476 aa).

Positions 54 to 156 (AENDIPLSKV…GKDALIYDKI (103 aa)) constitute a THUMP domain. ATP contacts are provided by residues 174-175 (MV), lysine 256, glycine 278, and glutamine 287. A disulfide bridge links cysteine 334 with cysteine 433. A Rhodanese domain is found at 388–470 (NLEDAVFIDL…LSKQKGSVDE (83 aa)). Cysteine 433 acts as the Cysteine persulfide intermediate in catalysis.

Belongs to the ThiI family.

The protein localises to the cytoplasm. The enzyme catalyses [ThiI sulfur-carrier protein]-S-sulfanyl-L-cysteine + a uridine in tRNA + 2 reduced [2Fe-2S]-[ferredoxin] + ATP + H(+) = [ThiI sulfur-carrier protein]-L-cysteine + a 4-thiouridine in tRNA + 2 oxidized [2Fe-2S]-[ferredoxin] + AMP + diphosphate. It catalyses the reaction [ThiS sulfur-carrier protein]-C-terminal Gly-Gly-AMP + S-sulfanyl-L-cysteinyl-[cysteine desulfurase] + AH2 = [ThiS sulfur-carrier protein]-C-terminal-Gly-aminoethanethioate + L-cysteinyl-[cysteine desulfurase] + A + AMP + 2 H(+). Its pathway is cofactor biosynthesis; thiamine diphosphate biosynthesis. Its function is as follows. Catalyzes the ATP-dependent transfer of a sulfur to tRNA to produce 4-thiouridine in position 8 of tRNAs, which functions as a near-UV photosensor. Also catalyzes the transfer of sulfur to the sulfur carrier protein ThiS, forming ThiS-thiocarboxylate. This is a step in the synthesis of thiazole, in the thiamine biosynthesis pathway. The sulfur is donated as persulfide by IscS. The chain is tRNA sulfurtransferase from Thermoplasma volcanium (strain ATCC 51530 / DSM 4299 / JCM 9571 / NBRC 15438 / GSS1).